The sequence spans 1551 residues: MSIEKVPILGKETIHVGYGIQDHIVTEVVDNLASSTYVIVTDTNVEKTPQFSKLTNDFTKVLNEKRPDSRVLTYSVPPGENNKNRATKAAVEDFLLQQGCTRDTVIIAVGGGVIGDMIGFVAATFMRGVRVVQVPTTLLAMVDSSVGGKTAIDTPLGKNFIGAFHQPQYVFIDVSYLESLPTRQFINGMAEVVKTAAIWNEEEFTRLENFSKQFLSVVTAKNPDLLSIKEELVKTVLESVRVKAEVVSSDEKESSLRNLLNFGHTIGHAIEAIVTPEALHGECVSIGMIKEAELARYLGILPPVAVARLSKCLVAYGLPVTIDDKLFLQRVGPKRHNIEIDLLLKKMSIDKKNDGSKIRSVILESIGKCYQLKAHEVSKQDLTFVLTDEVLVHPFKQPPQENVITPPGSKSISNRALILAALGTGTVRIKNLLHSDDTKHMLAAVAALKGAEITTEDNGETIVLKGNGGDLVTCDEELYLGNAGTASRFLTTVASLVGKSESNDHVVLTGNARMQERPIGPLVDALRSNGSEVQYLNKEGSLPLKITAGNGLKGGRIELAATISSQYVSSILMCAPYAKEPVTLALVGGKPISQLYIDMTCAMMKSFGIEVTKSTTEDYTYHIPKGTYKNPAEYVIESDASSATYPLAFAAMTGTSCTVPNIGSSSLQGDARFAVDVLKPMGCKVEQTATSTTVTGPPRGQLKPLPHVDMEPMTDAFLTASVVAAVAQGDSSTTITGIANQRVKECNRIEAMITELAKFGVKADELPDGIEIHGIDIADLKTPSIEKRGVCSYDDHRVAMSFSLLSGLCKEPVLILERSTTGKTWPGWWDILHSKFNIELDGYEPPFGTDKEGTKASDKSIIIIGMRGTGKSTLSEWLASFMGFKSLDMDVYLEEKLGNDIKSLIKEKGWEYFREQEAAIAKECFSKFSKGYVLSTGGGIVEGAENRQRLKDYITAGGIVLHLHRDLEETVSFLSVDTTRPAYTSEVKEVWLRREQWYDDCSNYHFYSSHCNTEEEFDHLRKSFVNFIKIITGTEKASIPSGRSAALSLTVPDLNAISSQLGDIAVGAEAVELRVDLLKETSSSFIADQIAVIRKHIDLPIIYTVRTESQGGKFPDNKVEELRNLLLLGVKLGVAFIDVELTAPVEVIEEIIIKKGYTRVIASYNDIAGKLGWSNVEWTNKYNQGVSINADIVKLIGRASSLQDNLELEVFRKQNTLKPLLAVNLGSQGKLSQVLNTIFTPITQESLPNEDGLLTIKEINQIYFDIGGLTAKKFWVIGSPIQHSRSPNLHNAAYKALNLPFTFDRFESTDADQVYKELINKPDFGGLAITMPLKLDIMKYATELSDAAQKIGAVNTLVPLEGGYLGDNTDWVGITSSFTRAGVPPNPRVNGLVIGAGGTSRAAIYALHQIGCEKIYLANRTTSKLNEIKDSFPKEYNLEVLETEDQAEKAQNVGLAVSCVPADKPLDESLLQKVEKILANGEKSSNGFKSTLLEASYKPRVTPMMKIADEKFKWRAIPGVEMLVNQGDRQFQIHTGFTAPYDVIHRAVVEE.

The interval 1-379 (MSIEKVPILG…YQLKAHEVSK (379 aa)) is 3-dehydroquinate synthase. Residues 42–44 (DTN), 80–83 (ENNK), 111–113 (GGV), and Asp-116 each bind NAD(+). Arg-127 provides a ligand contact to 7-phospho-2-dehydro-3-deoxy-D-arabino-heptonate. Residue 136-137 (TT) coordinates NAD(+). Positions 143 and 149 each coordinate 7-phospho-2-dehydro-3-deoxy-D-arabino-heptonate. NAD(+) is bound at residue Lys-158. A 7-phospho-2-dehydro-3-deoxy-D-arabino-heptonate-binding site is contributed by Asn-159. NAD(+)-binding positions include 176–179 (YLES) and Asn-187. Glu-191 contacts Zn(2+). Residues 191-194 (EVVK) and Lys-243 contribute to the 7-phospho-2-dehydro-3-deoxy-D-arabino-heptonate site. The Proton acceptor; for 3-dehydroquinate synthase activity role is filled by Glu-253. Residues 257–261 (RNLLN) and His-264 each bind 7-phospho-2-dehydro-3-deoxy-D-arabino-heptonate. His-264 provides a ligand contact to Zn(2+). His-268 functions as the Proton acceptor; for 3-dehydroquinate synthase activity in the catalytic mechanism. The 7-phospho-2-dehydro-3-deoxy-D-arabino-heptonate site is built by His-280 and Lys-351. His-280 is a binding site for Zn(2+). The tract at residues 392-838 (VHPFKQPPQE…WDILHSKFNI (447 aa)) is EPSP synthase. The segment at 858 to 1048 (DKSIIIIGMR…IPSGRSAALS (191 aa)) is shikimate kinase. 865–872 (GMRGTGKS) contributes to the ATP binding site. The interval 1049–1258 (LTVPDLNAIS…NEDGLLTIKE (210 aa)) is 3-dehydroquinase. Residue Lys-1194 is the Schiff-base intermediate with substrate; for 3-dehydroquinate dehydratase activity of the active site. The shikimate dehydrogenase stretch occupies residues 1271-1551 (AKKFWVIGSP…DVIHRAVVEE (281 aa)).

This sequence in the N-terminal section; belongs to the sugar phosphate cyclases superfamily. Dehydroquinate synthase family. In the 2nd section; belongs to the EPSP synthase family. The protein in the 3rd section; belongs to the shikimate kinase family. It in the 4th section; belongs to the type-I 3-dehydroquinase family. This sequence in the C-terminal section; belongs to the shikimate dehydrogenase family. In terms of assembly, homodimer. Zn(2+) serves as cofactor.

It is found in the cytoplasm. The catalysed reaction is 7-phospho-2-dehydro-3-deoxy-D-arabino-heptonate = 3-dehydroquinate + phosphate. It carries out the reaction 3-dehydroquinate = 3-dehydroshikimate + H2O. It catalyses the reaction shikimate + NADP(+) = 3-dehydroshikimate + NADPH + H(+). The enzyme catalyses shikimate + ATP = 3-phosphoshikimate + ADP + H(+). The catalysed reaction is 3-phosphoshikimate + phosphoenolpyruvate = 5-O-(1-carboxyvinyl)-3-phosphoshikimate + phosphate. Its pathway is metabolic intermediate biosynthesis; chorismate biosynthesis; chorismate from D-erythrose 4-phosphate and phosphoenolpyruvate: step 2/7. It participates in metabolic intermediate biosynthesis; chorismate biosynthesis; chorismate from D-erythrose 4-phosphate and phosphoenolpyruvate: step 3/7. It functions in the pathway metabolic intermediate biosynthesis; chorismate biosynthesis; chorismate from D-erythrose 4-phosphate and phosphoenolpyruvate: step 4/7. The protein operates within metabolic intermediate biosynthesis; chorismate biosynthesis; chorismate from D-erythrose 4-phosphate and phosphoenolpyruvate: step 5/7. Its pathway is metabolic intermediate biosynthesis; chorismate biosynthesis; chorismate from D-erythrose 4-phosphate and phosphoenolpyruvate: step 6/7. Functionally, the AROM polypeptide catalyzes 5 consecutive enzymatic reactions in prechorismate polyaromatic amino acid biosynthesis. The polypeptide is Pentafunctional AROM polypeptide (Candida tropicalis (strain ATCC MYA-3404 / T1) (Yeast)).